We begin with the raw amino-acid sequence, 371 residues long: UDP-N-acetylglucosamine--N-acetylmuramyl-(pentapeptide) pyrophosphoryl-undecaprenol N-acetylglucosamine transferase (371 aa).

Residues Thr-10–Gly-12, Asn-122, Arg-166, Ser-196, and Gln-301 contribute to the UDP-N-acetyl-alpha-D-glucosamine site.

This sequence belongs to the glycosyltransferase 28 family. MurG subfamily.

It localises to the cell inner membrane. The enzyme catalyses di-trans,octa-cis-undecaprenyl diphospho-N-acetyl-alpha-D-muramoyl-L-alanyl-D-glutamyl-meso-2,6-diaminopimeloyl-D-alanyl-D-alanine + UDP-N-acetyl-alpha-D-glucosamine = di-trans,octa-cis-undecaprenyl diphospho-[N-acetyl-alpha-D-glucosaminyl-(1-&gt;4)]-N-acetyl-alpha-D-muramoyl-L-alanyl-D-glutamyl-meso-2,6-diaminopimeloyl-D-alanyl-D-alanine + UDP + H(+). It functions in the pathway cell wall biogenesis; peptidoglycan biosynthesis. Functionally, cell wall formation. Catalyzes the transfer of a GlcNAc subunit on undecaprenyl-pyrophosphoryl-MurNAc-pentapeptide (lipid intermediate I) to form undecaprenyl-pyrophosphoryl-MurNAc-(pentapeptide)GlcNAc (lipid intermediate II). The polypeptide is UDP-N-acetylglucosamine--N-acetylmuramyl-(pentapeptide) pyrophosphoryl-undecaprenol N-acetylglucosamine transferase (Halothermothrix orenii (strain H 168 / OCM 544 / DSM 9562)).